The primary structure comprises 245 residues: 1-(5-phosphoribosyl)-5-[(5-phosphoribosylamino)methylideneamino] imidazole-4-carboxamide isomerase (245 aa).

Aspartate 8 acts as the Proton acceptor in catalysis. Catalysis depends on aspartate 129, which acts as the Proton donor.

This sequence belongs to the HisA/HisF family.

It is found in the cytoplasm. It carries out the reaction 1-(5-phospho-beta-D-ribosyl)-5-[(5-phospho-beta-D-ribosylamino)methylideneamino]imidazole-4-carboxamide = 5-[(5-phospho-1-deoxy-D-ribulos-1-ylimino)methylamino]-1-(5-phospho-beta-D-ribosyl)imidazole-4-carboxamide. It participates in amino-acid biosynthesis; L-histidine biosynthesis; L-histidine from 5-phospho-alpha-D-ribose 1-diphosphate: step 4/9. The polypeptide is 1-(5-phosphoribosyl)-5-[(5-phosphoribosylamino)methylideneamino] imidazole-4-carboxamide isomerase (Rhodopseudomonas palustris (strain BisA53)).